The sequence spans 1535 residues: CLIP-associating protein 1 (1535 aa).

HEAT repeat units follow at residues 87–124 and 163–200; these read AQIG…QAAN and LTLS…HVGE. Positions 237 to 290 are disordered; the sequence is NEKNFDDEDSVDGNRPSSASSSSSKAPSSSRRNVNLGTTRRLMSSSLGSKSSAA. Position 246 is a phosphoserine (Ser246). Residues 252–266 show a composition bias toward low complexity; that stretch reads PSSASSSSSKAPSSS. Residues 267–279 are compositionally biased toward polar residues; sequence RRNVNLGTTRRLM. Residues 280–290 show a composition bias toward low complexity; sequence SSSLGSKSSAA. HEAT repeat units follow at residues 405–440 and 441–477; these read HGAE…IRHT and HIPR…EWQT. Disordered regions lie at residues 543–600 and 612–782; these read SDSI…RSRS and SKVS…GRIP. Phosphoserine occurs at positions 545, 548, 558, 559, and 568. The segment covering 548–567 has biased composition (low complexity); the sequence is SLPQSDRSSSSSQESLNRPL. Positions 579–594 are enriched in low complexity; sequence SRGSTVSTKSVSTTGS. A Phosphoserine modification is found at Ser600. The segment covering 612–633 has biased composition (low complexity); the sequence is SKVSSSSGSPAFSSAAALPPGS. 4 positions are modified to phosphoserine: Ser636, Ser646, Ser647, and Ser649. Residues 645–658 are compositionally biased toward polar residues; it reads QSSGSTTNVASTPD. At Thr656 the chain carries Phosphothreonine. The segment at 662-782 is interaction with microtubules, MAPRE1 and MAPRE3; it reads RSRAKVVSQS…FGLGQSGRIP (121 aa). Residues 673–695 are compositionally biased toward low complexity; it reads RSRSANPAGAGSRSSSPGKLLGS. A phosphoserine mark is found at Ser684, Ser688, Ser695, and Ser702. Thr708 is modified (phosphothreonine). A Phosphoserine modification is found at Ser711. Residues 721-730 are compositionally biased toward polar residues; sequence QGCSRETSPN. Residues Ser784, Ser794, and Ser820 each carry the phosphoserine modification. An HEAT 5 repeat occupies 971–1008; that stretch reads QQFNILMRFIVDQTQTPNLKVKVAILKYIESLARQMDP. The segment at 1078–1157 is disordered; it reads LKNSSNTGVG…APSHKTLRRS (80 aa). Polar residues predominate over residues 1079–1094; it reads KNSSNTGVGSPSNTIG. At Ser1088 the chain carries Phosphoserine. Thr1092 and Thr1096 each carry phosphothreonine. The segment covering 1103 to 1112 has biased composition (low complexity); sequence SRTSPLTSPT. A phosphoserine mark is found at Ser1110, Phe1139, and Ser1193. Positions 1200–1213 are enriched in basic and acidic residues; that stretch reads PIKRDGKKDCDIVS. Disordered regions lie at residues 1200–1233 and 1245–1266; these read PIKR…EIEG and LNTQ…PYPY. Ser1220 is subject to Phosphoserine. Positions 1251–1535 are interaction with CLIP2 and RSN; the sequence is RAFPGPRARE…SSSSDVSTHS (285 aa). An interaction with PHLDB2 region spans residues 1251-1535; sequence RAFPGPRARE…SSSSDVSTHS (285 aa). The tract at residues 1253–1535 is localization to kinetochores; that stretch reads FPGPRAREYN…SSSSDVSTHS (283 aa). Residues 1296-1327 are a coiled coil; the sequence is DHSDLVADLLKELSNHNERVEERKGALLELLK. HEAT repeat units lie at residues 1339–1376 and 1457–1494; these read EHFK…NQPA and QLLV…VIGE.

Belongs to the CLASP family. Interacts with ERC1, MAPRE1, MAPRE3, microtubules, and PHLDB2. The interaction with ERC1 may be mediated by PHLDB2. Interacts with GCC2; recruits CLASP1 to Golgi membranes. Interacts with CLIP2 and RSN. Interacts with MACF1. Interacts with mtcl2 and MTCL1. In terms of tissue distribution, highly expressed in brain and heart and at lower levels in kidney, lung, skeletal muscle and testis.

It is found in the cytoplasm. The protein localises to the cytoskeleton. Its subcellular location is the microtubule organizing center. The protein resides in the centrosome. It localises to the chromosome. It is found in the centromere. The protein localises to the kinetochore. Its subcellular location is the spindle. The protein resides in the golgi apparatus. It localises to the trans-Golgi network. In terms of biological role, microtubule plus-end tracking protein that promotes the stabilization of dynamic microtubules. Involved in the nucleation of noncentrosomal microtubules originating from the trans-Golgi network (TGN). Required for the polarization of the cytoplasmic microtubule arrays in migrating cells towards the leading edge of the cell. May act at the cell cortex to enhance the frequency of rescue of depolymerizing microtubules by attaching their plus-ends to cortical platforms composed of ERC1 and PHLDB2. This cortical microtubule stabilizing activity is regulated at least in part by phosphatidylinositol 3-kinase signaling. Also performs a similar stabilizing function at the kinetochore which is essential for the bipolar alignment of chromosomes on the mitotic spindle. The polypeptide is CLIP-associating protein 1 (Clasp1) (Mus musculus (Mouse)).